The following is a 164-amino-acid chain: R-phycoerythrin alpha chain (164 aa).

Residues N47, K81, C82, R84, H88, R137, C139, and R142 each contribute to the (2R,3E)-phycoerythrobilin site.

This sequence belongs to the phycobiliprotein family. In terms of assembly, heterododecamer of 6 alpha and 6 beta chains. The basic functional unit of phycobiliproteins is a ring-shaped hexamer formed from two back-to-back trimers contacting via the alpha chain subunits. The trimers are composed of alpha/beta subunit heterodimers arranged around a three-fold axis of symmetry. The phycoerythrins also contain a gamma subunit which is located in the center of the hexamer. Contains two covalently linked phycoerythrobilin chromophores. In PubMed:8876649 the authors refer to the bilins as phycoerythrobilins. In the PDB entries, the bilins are named as phycocyanobilins although the modeled compounds correspond to phycoerythrobilins.

Its subcellular location is the plastid. It is found in the chloroplast thylakoid membrane. Light-harvesting photosynthetic tetrapyrrole chromophore-protein from the phycobiliprotein complex. The chain is R-phycoerythrin alpha chain (cpeA) from Polysiphonia urceolata (Red alga).